Reading from the N-terminus, the 1796-residue chain is Y' element ATP-dependent helicase protein 1 copy 5 (1796 aa).

The segment at 743–767 (AGEAASSDHDQKISRVTRKRPREPK) is disordered. Positions 797 to 974 (EIYMADTPSV…LQRIGLTGLA (178 aa)) constitute a Helicase ATP-binding domain. ATP is bound at residue 810–817 (APPGYGKT). The 150-residue stretch at 1031 to 1180 (KLLLALFEIE…EFYGLESKKG (150 aa)) folds into the Helicase C-terminal domain. Disordered stretches follow at residues 1254 to 1278 (ANAS…NVRT) and 1294 to 1421 (TTES…DINK). The segment covering 1294-1397 (TTESTNSSTN…ATTTESTNAS (104 aa)) has biased composition (low complexity). The segment covering 1398-1421 (AKEDANKDGNAEDNRFHPVTDINK) has biased composition (basic and acidic residues).

Belongs to the helicase family. Yeast subtelomeric Y' repeat subfamily.

In terms of biological role, catalyzes DNA unwinding and is involved in telomerase-independent telomere maintenance. The chain is Y' element ATP-dependent helicase protein 1 copy 5 (YRF1-5) from Saccharomyces cerevisiae (strain ATCC 204508 / S288c) (Baker's yeast).